The primary structure comprises 131 residues: Snaclec coagulation factor IX/factor X-binding protein subunit A (131 aa).

The C-type lectin domain occupies 1 to 131 (DCLPGWSSHE…EEPQRFTCEI (131 aa)). 3 disulfides stabilise this stretch: Cys-2–Cys-13, Cys-30–Cys-129, and Cys-104–Cys-121. Ser-41, Glu-43, and Glu-47 together coordinate Ca(2+). A Ca(2+)-binding site is contributed by Glu-130.

Belongs to the snaclec family. Heterodimer of subunits A and B; disulfide-linked. In terms of tissue distribution, expressed by the venom gland.

It is found in the secreted. Functionally, anticoagulant protein which binds to coagulation factor IX (F9) and coagulation factor X (F10) in the presence of calcium. It may bind the gamma-carboxyglutamic acid-domain regions of factors with a 1 to 1 stoichiometry. The dissociation constant (K(d)) are 6.6 nM for factor IX (F9) and 125 nM for factor X (F10). Does not bind carbohydrates. This is Snaclec coagulation factor IX/factor X-binding protein subunit A from Echis carinatus (Saw-scaled viper).